Reading from the N-terminus, the 262-residue chain is Probable carboxylesterase SOBER1-like (262 aa).

Active-site charge relay system residues include Ser-151, Asp-205, and His-237.

Belongs to the AB hydrolase superfamily. AB hydrolase 2 family.

Carboxylesterase. The polypeptide is Probable carboxylesterase SOBER1-like (Arabidopsis thaliana (Mouse-ear cress)).